Reading from the N-terminus, the 477-residue chain is Bifunctional protein HldE (477 aa).

Residues 1 to 318 (MKVNLPAFER…ENAVRGRADT (318 aa)) form a ribokinase region. 195 to 198 (NLSE) provides a ligand contact to ATP. Asp-264 is a catalytic residue. Residues 344–477 (MTNGVFDILH…IKKIQTESEK (134 aa)) form a cytidylyltransferase region.

In the N-terminal section; belongs to the carbohydrate kinase PfkB family. It in the C-terminal section; belongs to the cytidylyltransferase family. As to quaternary structure, homodimer.

It catalyses the reaction D-glycero-beta-D-manno-heptose 7-phosphate + ATP = D-glycero-beta-D-manno-heptose 1,7-bisphosphate + ADP + H(+). The catalysed reaction is D-glycero-beta-D-manno-heptose 1-phosphate + ATP + H(+) = ADP-D-glycero-beta-D-manno-heptose + diphosphate. It participates in nucleotide-sugar biosynthesis; ADP-L-glycero-beta-D-manno-heptose biosynthesis; ADP-L-glycero-beta-D-manno-heptose from D-glycero-beta-D-manno-heptose 7-phosphate: step 1/4. The protein operates within nucleotide-sugar biosynthesis; ADP-L-glycero-beta-D-manno-heptose biosynthesis; ADP-L-glycero-beta-D-manno-heptose from D-glycero-beta-D-manno-heptose 7-phosphate: step 3/4. Functionally, catalyzes the phosphorylation of D-glycero-D-manno-heptose 7-phosphate at the C-1 position to selectively form D-glycero-beta-D-manno-heptose-1,7-bisphosphate. In terms of biological role, catalyzes the ADP transfer from ATP to D-glycero-beta-D-manno-heptose 1-phosphate, yielding ADP-D-glycero-beta-D-manno-heptose. The sequence is that of Bifunctional protein HldE from Salmonella dublin (strain CT_02021853).